A 346-amino-acid chain; its full sequence is Growth hormone-inducible transmembrane protein (346 aa).

A mitochondrion-targeting transit peptide spans 1–45 (MLAARLVCLRTLPSRVFQPTFITKASPLVKNSITKNQWLVTPSRE). Residues 46-83 (YATKTRIRTHRGKTGQELKEAALEPSMEKIFKIDQMGR) are Mitochondrial matrix-facing. The helical transmembrane segment at 84–104 (WFVAGGAAVGLGALCYYGLGM) threads the bilayer. Topologically, residues 105–126 (SNEIGAIEKAVIWPQYVKDRIH) are mitochondrial intermembrane. A helical membrane pass occupies residues 127–147 (STYMYLAGSIGLTALSALAVA). At 148–160 (RTPALMNFMMTGS) the chain is on the mitochondrial matrix side. A helical transmembrane segment spans residues 161–181 (WVTIGATFAAMIGAGMLVHSI). Topologically, residues 182 to 191 (SYEQSPGPKH) are mitochondrial intermembrane. Residues 192–212 (LAWMLHSGVMGAVVAPLTILG) traverse the membrane as a helical segment. Topologically, residues 213–214 (GP) are mitochondrial matrix. Residues 215 to 235 (LLLRAAWYTAGIVGGLSTVAM) traverse the membrane as a helical segment. Residues 236 to 245 (CAPSEKFLNM) are Mitochondrial intermembrane-facing. A helical membrane pass occupies residues 246–266 (GAPLGVGLGLVFASSLGSMFL). Residues 267–272 (PPTSVA) are Mitochondrial matrix-facing. The chain crosses the membrane as a helical span at residues 273–293 (GATLYSVAMYGGLVLFSMFLL). Over 294–346 (YDTQKVIKRAEITPMYGAQKYDPINSMLTIYMDTLNIFMRVATMLATGSNRKK) the chain is Mitochondrial intermembrane.

This sequence belongs to the BI1 family. In terms of assembly, interacts with LETM1 and AFG3L2. Post-translationally, undergoes AFG3L2-mediated proteolytic degradation, upon hyperpolarization of mitochondria.

It is found in the mitochondrion inner membrane. It catalyses the reaction Ca(2+)(in) + 2 H(+)(out) = Ca(2+)(out) + 2 H(+)(in). The catalysed reaction is K(+)(in) + H(+)(out) = K(+)(out) + H(+)(in). Its function is as follows. Plays an important role in maintenance of mitochondrial morphology and in mediating either calcium or potassium/proton antiport. Mediates proton-dependent calcium efflux from mitochondrion. Also functions as an electroneutral mitochondrial proton/potassium exchanger. Required for the mitochondrial tubular network and cristae organization. Involved in apoptotic release of cytochrome c. Inhibits AFG3L2 proteolytic activity, stimulating respiration and stabilizing respiratory enzymes in actively respiring mitochondria. However, when mitochondria become hyperpolarized, GHITM loses its inhibitory activity toward AFG3L2 and the now active AFG3L2 turns first on GHITM and, if hyperpolarization persists, on other proteins of the mitochondria, leading to a broad remodeling of the mitochondrial proteome. This is Growth hormone-inducible transmembrane protein (Ghitm) from Mus musculus (Mouse).